A 157-amino-acid chain; its full sequence is Small ribosomal subunit protein uS17 (157 aa).

This sequence belongs to the universal ribosomal protein uS17 family.

The chain is Small ribosomal subunit protein uS17 (RPS11) from Dunaliella tertiolecta (Green alga).